We begin with the raw amino-acid sequence, 276 residues long: Large ribosomal subunit protein uL2 (276 aa).

The tract at residues 225–276 (MNPNDHPHGGGEGRNPIGRNPVTPWGKPALGAKTRKKKHPSNRFIVKRRGKK) is disordered. The segment covering 257-276 (KTRKKKHPSNRFIVKRRGKK) has biased composition (basic residues).

The protein belongs to the universal ribosomal protein uL2 family. As to quaternary structure, part of the 50S ribosomal subunit. Forms a bridge to the 30S subunit in the 70S ribosome.

Its function is as follows. One of the primary rRNA binding proteins. Required for association of the 30S and 50S subunits to form the 70S ribosome, for tRNA binding and peptide bond formation. It has been suggested to have peptidyltransferase activity; this is somewhat controversial. Makes several contacts with the 16S rRNA in the 70S ribosome. The chain is Large ribosomal subunit protein uL2 from Desulfitobacterium hafniense (strain Y51).